Reading from the N-terminus, the 299-residue chain is Bifunctional protein FolD (299 aa).

NADP(+) is bound by residues 168–170, serine 193, and isoleucine 234; that span reads GRS.

The protein belongs to the tetrahydrofolate dehydrogenase/cyclohydrolase family. In terms of assembly, homodimer.

The catalysed reaction is (6R)-5,10-methylene-5,6,7,8-tetrahydrofolate + NADP(+) = (6R)-5,10-methenyltetrahydrofolate + NADPH. The enzyme catalyses (6R)-5,10-methenyltetrahydrofolate + H2O = (6R)-10-formyltetrahydrofolate + H(+). The protein operates within one-carbon metabolism; tetrahydrofolate interconversion. Its function is as follows. Catalyzes the oxidation of 5,10-methylenetetrahydrofolate to 5,10-methenyltetrahydrofolate and then the hydrolysis of 5,10-methenyltetrahydrofolate to 10-formyltetrahydrofolate. In Agrobacterium fabrum (strain C58 / ATCC 33970) (Agrobacterium tumefaciens (strain C58)), this protein is Bifunctional protein FolD.